We begin with the raw amino-acid sequence, 324 residues long: MASCVLLHTGQKMPLIGLGTWKSNPGQVKAAIKYALSVGYRHIDCAAVYGNEIEIGEALKENVGPGKAVPREELFVTSKLWNTKHHPEDVEAALRKTLADLQLEYLDLYLMHWPYAFERGDNPFPKNDDGTIRYDSTHYKETWKALEALVAKGLVKALGLSNFNSRQIDDILSVASVRPAVLQVECHPYLAQNELIAHCQARGLEVTAYSPLGSSDRAWRHPDEPVLLEEPVVLALAEKHGRSPAQILLRWQVQRKVVCIPKSITPSRILQNIQVFDFTFSPEEMKQLDALNKHWRYIVPMITVDGKSVPRDAGHPLYPFNDPY.

A Phosphoserine modification is found at serine 3. Residues 10–19 (GQKMPLIGLG), threonine 20, and tryptophan 21 contribute to the NADP(+) site. Serine 37 is modified (phosphoserine). Residue aspartate 44 participates in NADP(+) binding. Tyrosine 49 (proton donor) is an active-site residue. Lysine 126 carries the post-translational modification N6-acetyllysine; alternate. Lysine 126 carries the post-translational modification N6-succinyllysine; alternate. An N6-succinyllysine modification is found at lysine 144. 13 residues coordinate NADP(+): serine 161, asparagine 162, serine 210, leucine 212, serine 214, serine 215, lysine 262, serine 263, isoleucine 264, threonine 265, arginine 268, glutamine 271, and asparagine 272. Serine 210 carries the phosphoserine modification.

Belongs to the aldo/keto reductase family.

It is found in the cytoplasm. The protein resides in the cytosol. Its subcellular location is the apical cell membrane. The catalysed reaction is a primary alcohol + NADP(+) = an aldehyde + NADPH + H(+). It carries out the reaction L-gulonate + NADP(+) = aldehydo-D-glucuronate + NADPH + H(+). The enzyme catalyses L-gulono-1,4-lactone + NADP(+) = D-glucurono-3,6-lactone + NADPH + H(+). It catalyses the reaction allyl alcohol + NADP(+) = acrolein + NADPH + H(+). The catalysed reaction is glycerol + NADP(+) = D-glyceraldehyde + NADPH + H(+). It carries out the reaction glycerol + NADP(+) = L-glyceraldehyde + NADPH + H(+). The enzyme catalyses hydroxyacetone + NADP(+) = methylglyoxal + NADPH + H(+). It catalyses the reaction 3-deoxyfructose + NADP(+) = 3-deoxyglucosone + NADPH + H(+). The catalysed reaction is (R)-mevalonate + NADP(+) = (R)-mevaldate + NADPH + H(+). It carries out the reaction S-nitroso-CoA + NADPH + H(+) = sulfinamide-CoA + NADP(+). The enzyme catalyses S-nitrosoglutathione + NADPH + H(+) = S-(hydroxysulfenamide)glutathione + NADP(+). In terms of biological role, catalyzes the NADPH-dependent reduction of a wide variety of carbonyl-containing compounds to their corresponding alcohols. Displays enzymatic activity towards endogenous metabolites such as aromatic and aliphatic aldehydes, ketones, monosaccharides and bile acids, with a preference for negatively charged substrates, such as glucuronate and succinic semialdehyde. Plays an important role by catalyzing the reduction of D-glucuronic acid and D-glucurono-gamma-lactone. Functions as a detoxifiying enzyme by reducing a range of toxic aldehydes. Reduces methylglyoxal and 3-deoxyglucosone, which are present at elevated levels under hyperglycemic conditions and are cytotoxic. Involved also in the detoxification of lipid-derived aldehydes like acrolein. Plays a role in the activation of procarcinogens, such as polycyclic aromatic hydrocarbon trans-dihydrodiols, and in the metabolism of various xenobiotics and drugs. Also acts as an inhibitor of protein S-nitrosylation by mediating degradation of S-nitroso-coenzyme A (S-nitroso-CoA), a cofactor required to S-nitrosylate proteins. S-nitroso-CoA reductase activity is involved in reprogramming intermediary metabolism in renal proximal tubules, notably by inhibiting protein S-nitrosylation of isoform 2 of PKM (PKM2). Also acts as a S-nitroso-glutathione reductase by catalyzing the NADPH-dependent reduction of S-nitrosoglutathione. Displays no reductase activity towards retinoids. The sequence is that of Aldo-keto reductase family 1 member A1 (AKR1A1) from Cricetulus griseus (Chinese hamster).